Here is a 350-residue protein sequence, read N- to C-terminus: Bifunctional methylenetetrahydrofolate dehydrogenase/cyclohydrolase, mitochondrial (350 aa).

A mitochondrion-targeting transit peptide spans 1–35 (MAAASFITSLVTRLLRSAQSGRLHQRPFHLSAVRN). Lysine 50 is modified (N6-acetyllysine; alternate). Residue lysine 50 forms a Glycyl lysine isopeptide (Lys-Gly) (interchain with G-Cter in SUMO2); alternate linkage. Substrate contacts are provided by residues 84-88 (YVLNK) and 131-133 (VQL). Residues 200 to 202 (GRS) and arginine 233 each bind NAD(+). 309 to 313 (PGGVG) provides a ligand contact to substrate.

Belongs to the tetrahydrofolate dehydrogenase/cyclohydrolase family. In terms of assembly, homodimer. The cofactor is Mg(2+).

It localises to the mitochondrion. The catalysed reaction is (6R)-5,10-methylene-5,6,7,8-tetrahydrofolate + NAD(+) = (6R)-5,10-methenyltetrahydrofolate + NADH. It carries out the reaction (6R)-5,10-methenyltetrahydrofolate + H2O = (6R)-10-formyltetrahydrofolate + H(+). Its function is as follows. Although its dehydrogenase activity is NAD-specific, it can also utilize NADP at a reduced efficiency. The sequence is that of Bifunctional methylenetetrahydrofolate dehydrogenase/cyclohydrolase, mitochondrial (MTHFD2) from Bos taurus (Bovine).